Reading from the N-terminus, the 904-residue chain is Dynamin-like protein C (904 aa).

Residues 44–102 (IAEAMALKMHEEEKKKREEKKRKRDNEELLSKQVRTKLENERKKLDDSESINASTNQEL) are a coiled coil. A disordered region spans residues 53–93 (HEEEKKKREEKKRKRDNEELLSKQVRTKLENERKKLDDSES). The span at 67–90 (RDNEELLSKQVRTKLENERKKLDD) shows a compositional bias: basic and acidic residues. The Dynamin-type G domain occupies 119-441 (SFDTPELVVV…HEKYQQNLLP (323 aa)). The segment at 129–136 (GMQSDGKS) is G1 motif. GTP is bound at residue 129–136 (GMQSDGKS). The interval 155–157 (GTR) is G2 motif. A disordered region spans residues 169–227 (SKQQPSCRFKKEDYSNSYGGSSSSTSTTSGNSNHNTDKQQNVSSSQGGGGGSNNLNEDK). Residues 183 to 213 (SNSYGGSSSSTSTTSGNSNHNTDKQQNVSSS) show a composition bias toward low complexity. The segment at 278–281 (DTPG) is G3 motif. Residues 278–282 (DTPGF) and 343–346 (TKFD) contribute to the GTP site. The interval 343–346 (TKFD) is G4 motif. A G5 motif region spans residues 378–381 (LPLK). A coiled-coil region spans residues 781–811 (EMFQLGLKELENKLHKLEFQLIDCKKNRDKF). Disordered stretches follow at residues 821–840 (SLNQ…ASSS) and 853–904 (NGKF…FDQN). Residues 853–876 (NGKFSTPDKNSLTMSPFTSPFTQS) are compositionally biased toward polar residues. The segment covering 877-891 (NYHQHNNNNYQINQQ) has biased composition (low complexity).

It belongs to the TRAFAC class dynamin-like GTPase superfamily. Dynamin/Fzo/YdjA family.

It localises to the cytoplasm. The enzyme catalyses GTP + H2O = GDP + phosphate + H(+). Its function is as follows. Involved in cytokinesis. May hydrolyze GTP. The protein is Dynamin-like protein C (dlpC) of Dictyostelium discoideum (Social amoeba).